Here is a 191-residue protein sequence, read N- to C-terminus: Ion-translocating oxidoreductase complex subunit B (191 aa).

The interval 1 to 26 is hydrophobic; it reads MSAIWIAIAVLSALSLVFGGLLGYAS. A 4Fe-4S domain is found at 32 to 91; the sequence is EEDPIVEQIDAILPQSQCGQCGYPGCRPYADAVGNNGEMINKCAPGGEQTMLKLAALLNV. Residues Cys-49, Cys-52, Cys-57, Cys-74, Cys-116, Cys-119, Cys-122, Cys-126, Cys-146, Cys-149, Cys-152, and Cys-156 each contribute to the [4Fe-4S] cluster site. 4Fe-4S ferredoxin-type domains lie at 107 to 136 and 137 to 166; these read KVAW…GATR and AMHT…MRPV.

The protein belongs to the 4Fe4S bacterial-type ferredoxin family. RnfB subfamily. In terms of assembly, the complex is composed of six subunits: RnfA, RnfB, RnfC, RnfD, RnfE and RnfG. It depends on [4Fe-4S] cluster as a cofactor.

The protein localises to the cell inner membrane. In terms of biological role, part of a membrane-bound complex that couples electron transfer with translocation of ions across the membrane. The polypeptide is Ion-translocating oxidoreductase complex subunit B (Erwinia tasmaniensis (strain DSM 17950 / CFBP 7177 / CIP 109463 / NCPPB 4357 / Et1/99)).